We begin with the raw amino-acid sequence, 664 residues long: UvrABC system protein B (664 aa).

Residues 25 to 182 (KSFGEGKNKI…RKFLHIQYAR (158 aa)) enclose the Helicase ATP-binding domain. An ATP-binding site is contributed by 38–45 (GVTGSGKT). Residues 91–114 (YYDYYQPEAYVPSSDTFIEKDMSM) carry the Beta-hairpin motif. Positions 429–595 (QIEDLLNEIR…TIQKEIHDIL (167 aa)) constitute a Helicase C-terminal domain. Positions 625–660 (DKLREALKREMLRYANDMDFEKAAMFRDKMLALGPD) constitute a UVR domain.

This sequence belongs to the UvrB family. As to quaternary structure, forms a heterotetramer with UvrA during the search for lesions. Interacts with UvrC in an incision complex.

The protein resides in the cytoplasm. In terms of biological role, the UvrABC repair system catalyzes the recognition and processing of DNA lesions. A damage recognition complex composed of 2 UvrA and 2 UvrB subunits scans DNA for abnormalities. Upon binding of the UvrA(2)B(2) complex to a putative damaged site, the DNA wraps around one UvrB monomer. DNA wrap is dependent on ATP binding by UvrB and probably causes local melting of the DNA helix, facilitating insertion of UvrB beta-hairpin between the DNA strands. Then UvrB probes one DNA strand for the presence of a lesion. If a lesion is found the UvrA subunits dissociate and the UvrB-DNA preincision complex is formed. This complex is subsequently bound by UvrC and the second UvrB is released. If no lesion is found, the DNA wraps around the other UvrB subunit that will check the other stand for damage. This is UvrABC system protein B from Leptospira biflexa serovar Patoc (strain Patoc 1 / Ames).